We begin with the raw amino-acid sequence, 153 residues long: Ubiquitin-conjugating enzyme E2-18 kDa (153 aa).

One can recognise a UBC core domain in the interval 2–149 (AATRRLTREL…AEEFTKKNAE (148 aa)). The active-site Glycyl thioester intermediate is the Cys-86.

It belongs to the ubiquitin-conjugating enzyme family.

It carries out the reaction S-ubiquitinyl-[E1 ubiquitin-activating enzyme]-L-cysteine + [E2 ubiquitin-conjugating enzyme]-L-cysteine = [E1 ubiquitin-activating enzyme]-L-cysteine + S-ubiquitinyl-[E2 ubiquitin-conjugating enzyme]-L-cysteine.. Its pathway is protein modification; protein ubiquitination. Functionally, catalyzes the covalent attachment of ubiquitin to other proteins. In Drosophila melanogaster (Fruit fly), this protein is Ubiquitin-conjugating enzyme E2-18 kDa (Ubc84D).